Consider the following 120-residue polypeptide: Cell division protein FtsL (120 aa).

The disordered stretch occupies residues 1–22 (MSNVAYKSNLEPNRVHREAEQP). Over 1–37 (MSNVAYKSNLEPNRVHREAEQPKKQILKRGQMTLGEK) the chain is Cytoplasmic. Over residues 13 to 22 (NRVHREAEQP) the composition is skewed to basic and acidic residues. The chain crosses the membrane as a helical span at residues 38–58 (VIITIALAIVLVVAFRIISVQ). At 59–120 (AQIYTVNQEI…GDNVKVVDGQ (62 aa)) the chain is on the extracellular side.

Belongs to the FtsL family.

It localises to the cell membrane. Functionally, essential cell division protein. The chain is Cell division protein FtsL from Listeria monocytogenes serovar 1/2a (strain ATCC BAA-679 / EGD-e).